A 150-amino-acid polypeptide reads, in one-letter code: UPF0178 protein DMR_20710 (150 aa).

Belongs to the UPF0178 family.

This chain is UPF0178 protein DMR_20710, found in Solidesulfovibrio magneticus (strain ATCC 700980 / DSM 13731 / RS-1) (Desulfovibrio magneticus).